The following is a 603-amino-acid chain: DNA mismatch repair protein MutL (603 aa).

Over residues 336–346 the composition is skewed to basic and acidic residues; that stretch reads EVSKKQKEQQK. Disordered regions lie at residues 336-355 and 361-384; these read EVSK…MSFE and KETP…DTSR.

This sequence belongs to the DNA mismatch repair MutL/HexB family.

Its function is as follows. This protein is involved in the repair of mismatches in DNA. It is required for dam-dependent methyl-directed DNA mismatch repair. May act as a 'molecular matchmaker', a protein that promotes the formation of a stable complex between two or more DNA-binding proteins in an ATP-dependent manner without itself being part of a final effector complex. This chain is DNA mismatch repair protein MutL, found in Listeria welshimeri serovar 6b (strain ATCC 35897 / DSM 20650 / CCUG 15529 / CIP 8149 / NCTC 11857 / SLCC 5334 / V8).